Consider the following 265-residue polypeptide: Putative hydro-lyase PST_2764 (265 aa).

It belongs to the D-glutamate cyclase family.

This chain is Putative hydro-lyase PST_2764, found in Stutzerimonas stutzeri (strain A1501) (Pseudomonas stutzeri).